A 491-amino-acid polypeptide reads, in one-letter code: Ketol-acid reductoisomerase (NADP(+)) (491 aa).

Positions 15 to 208 constitute a KARI N-terminal Rossmann domain; the sequence is AQLGKCRFMG…GGHRAGVLES (194 aa). Residues 45 to 48, Arg-68, Arg-76, Ser-78, and 108 to 110 contribute to the NADP(+) site; these read CGAQ and DKQ. The active site involves His-132. Gly-158 contacts NADP(+). KARI C-terminal knotted domains lie at 209 to 344 and 345 to 484; these read SFVA…TAPQ and YEGK…MTDM. Mg(2+) is bound by residues Asp-217, Glu-221, Glu-389, and Glu-393. Ser-414 lines the substrate pocket.

The protein belongs to the ketol-acid reductoisomerase family. Requires Mg(2+) as cofactor.

The enzyme catalyses (2R)-2,3-dihydroxy-3-methylbutanoate + NADP(+) = (2S)-2-acetolactate + NADPH + H(+). It carries out the reaction (2R,3R)-2,3-dihydroxy-3-methylpentanoate + NADP(+) = (S)-2-ethyl-2-hydroxy-3-oxobutanoate + NADPH + H(+). The protein operates within amino-acid biosynthesis; L-isoleucine biosynthesis; L-isoleucine from 2-oxobutanoate: step 2/4. It functions in the pathway amino-acid biosynthesis; L-valine biosynthesis; L-valine from pyruvate: step 2/4. Functionally, involved in the biosynthesis of branched-chain amino acids (BCAA). Catalyzes an alkyl-migration followed by a ketol-acid reduction of (S)-2-acetolactate (S2AL) to yield (R)-2,3-dihydroxy-isovalerate. In the isomerase reaction, S2AL is rearranged via a Mg-dependent methyl migration to produce 3-hydroxy-3-methyl-2-ketobutyrate (HMKB). In the reductase reaction, this 2-ketoacid undergoes a metal-dependent reduction by NADPH to yield (R)-2,3-dihydroxy-isovalerate. This Shigella dysenteriae serotype 1 (strain Sd197) protein is Ketol-acid reductoisomerase (NADP(+)).